Reading from the N-terminus, the 326-residue chain is uncharacterized protein (326 aa).

The segment at 293–326 (HRNYDANHSTSGEEENSGSRSRIAELSQSTIHRR) is disordered.

This is an uncharacterized protein from Oryza latifolia (Indian wild rice).